Consider the following 397-residue polypeptide: Tryptophan synthase beta chain (397 aa).

Residue Lys91 is modified to N6-(pyridoxal phosphate)lysine.

Belongs to the TrpB family. In terms of assembly, tetramer of two alpha and two beta chains. The cofactor is pyridoxal 5'-phosphate.

The enzyme catalyses (1S,2R)-1-C-(indol-3-yl)glycerol 3-phosphate + L-serine = D-glyceraldehyde 3-phosphate + L-tryptophan + H2O. The protein operates within amino-acid biosynthesis; L-tryptophan biosynthesis; L-tryptophan from chorismate: step 5/5. In terms of biological role, the beta subunit is responsible for the synthesis of L-tryptophan from indole and L-serine. This chain is Tryptophan synthase beta chain, found in Bacillus cereus (strain AH187).